Consider the following 459-residue polypeptide: Sperm microtubule associated protein 2-like (459 aa).

Positions 1–138 (MEEGDFSGSS…QEDGKDDLFP (138 aa)) are disordered. Residues 21–30 (TTTTTETRTT) show a composition bias toward low complexity. Positions 47–63 (NGDEAEAVGEEGQEEDY) are enriched in acidic residues. Basic and acidic residues predominate over residues 64–73 (EGSKTHKSHE). The span at 77 to 87 (SFRSHNSSDPP) shows a compositional bias: polar residues. Composition is skewed to basic and acidic residues over residues 91–112 (KASD…KTSD) and 127–136 (ERQEDGKDDL). THEG repeat units lie at residues 172-190 (KKCF…PKKQ), 212-231 (AALK…PRLV), 258-277 (PALV…PNKF), 291-310 (TTRY…AKGT), 327-346 (STLS…PRIK), 367-386 (AALL…SKRV), 403-422 (AATH…PHTR), and 440-459 (SALK…PIVR).

This Mus musculus (Mouse) protein is Sperm microtubule associated protein 2-like.